The following is a 358-amino-acid chain: Polyadenylate-binding protein-interacting protein 11 (358 aa).

Residues 1-19 (MAVVETGAAATAADAGGVV) show a composition bias toward low complexity. Residues 1–45 (MAVVETGAAATAADAGGVVIQPPPSSPPSSMTSQDSGVSSDDQNH) are disordered. Residues 31-41 (MTSQDSGVSSD) show a composition bias toward polar residues. Positions 92-102 (KLNPMAEEFVP) match the PAM2-like motif. The segment at 136–164 (GGYGNENGGFRRKKSFGQGKRRMNARTSM) is disordered. Basic residues predominate over residues 145-159 (FRRKKSFGQGKRRMN). The short motif at 146-157 (RRKKSFGQGKRR) is the Bipartite nuclear localization signal element. RRM domains are found at residues 173–248 (RTVY…PSKT) and 270–346 (RTIY…PSKT).

In terms of tissue distribution, expressed in cauline leaves, stems, immature siliques and primary inflorescences.

The protein localises to the nucleus. In Arabidopsis thaliana (Mouse-ear cress), this protein is Polyadenylate-binding protein-interacting protein 11 (CID11).